The sequence spans 232 residues: Large ribosomal subunit protein uL3 (232 aa).

It belongs to the universal ribosomal protein uL3 family. In terms of assembly, part of the 50S ribosomal subunit. Forms a cluster with proteins L14 and L19.

Functionally, one of the primary rRNA binding proteins, it binds directly near the 3'-end of the 23S rRNA, where it nucleates assembly of the 50S subunit. The protein is Large ribosomal subunit protein uL3 of Sorangium cellulosum (strain So ce56) (Polyangium cellulosum (strain So ce56)).